The sequence spans 229 residues: Ras-related protein Rab-33B (229 aa).

Residues Asn43, Val44, Gly45, Lys46, Thr47, Cys48, Thr62, and Thr65 each contribute to the GTP site. Thr47 contributes to the Mg(2+) binding site. A Switch 1 motif is present at residues Gly56–Val68. Positions 65 and 88 each coordinate Mg(2+). Residues Thr89–His108 carry the Switch 2 motif. Residues Gly91, Asn148, Lys149, Asp151, Ala179, and Lys180 each contribute to the GTP site. 2 S-geranylgeranyl cysteine lipidation sites follow: Cys227 and Cys229. Cys229 carries the post-translational modification Cysteine methyl ester.

This sequence belongs to the small GTPase superfamily. Rab family. As to quaternary structure, interacts (GTP- and GDP-bound forms) with ATG16L1; the complex consists of a tetramer where two RAB33B molecules bind independently one molecule of the ATG16L1 homodimer; the interaction promotes ATG12-ATG5-ATG16L1 complex recruitment to phagophores. Interacts with ATG16L2; however interaction is approximately hundred times lower than for ATG16L1. Interacts with RIC1 (via C-terminus domain); the interaction is direct with a preference for RAB33B-GTP. Interacts with RGP1. Mg(2+) serves as cofactor. Prenylated.

It is found in the golgi apparatus membrane. The protein resides in the golgi apparatus. It localises to the cis-Golgi network. The protein localises to the preautophagosomal structure membrane. The catalysed reaction is GTP + H2O = GDP + phosphate + H(+). Regulated by guanine nucleotide exchange factors (GEFs) which promote the exchange of bound GDP for free GTP. Regulated by GTPase activating proteins (GAPs) such as SGSM2 which increase the GTP hydrolysis activity. Inhibited by GDP dissociation inhibitors (GDIs). Functionally, the small GTPases Rab are key regulators of intracellular membrane trafficking, from the formation of transport vesicles to their fusion with membranes. Rabs cycle between an inactive GDP-bound form and an active GTP-bound form that is able to recruit to membranes different sets of downstream effectors directly responsible for vesicle formation, movement, tethering and fusion. RAB33B acts, in coordination with RAB6A, to regulate intra-Golgi retrograde trafficking. Participates in autophagosome formation by recruiting the ATG12-ATG5-ATG16L1 complex to phagophores, probably in a nucleotide-independent manner. This is Ras-related protein Rab-33B (RAB33B) from Pongo abelii (Sumatran orangutan).